The following is a 210-amino-acid chain: Ribonuclease HII (210 aa).

One can recognise an RNase H type-2 domain in the interval 18–210; that stretch reads GLIAGVDEVG…FKPVKALLGL (193 aa). 3 residues coordinate a divalent metal cation: Asp-24, Glu-25, and Asp-116.

This sequence belongs to the RNase HII family. Requires Mn(2+) as cofactor. The cofactor is Mg(2+).

It localises to the cytoplasm. The enzyme catalyses Endonucleolytic cleavage to 5'-phosphomonoester.. Endonuclease that specifically degrades the RNA of RNA-DNA hybrids. The chain is Ribonuclease HII from Shewanella baltica (strain OS223).